The primary structure comprises 873 residues: Sine oculis-binding protein homolog (873 aa).

Over residues 1 to 14 (MAEMEKEGRPPENK) the composition is skewed to basic and acidic residues. A disordered region spans residues 1–26 (MAEMEKEGRPPENKRSRKPAHPVKRE). 2 FCS-type zinc fingers span residues 142–180 (DDVS…KCFA) and 216–256 (FKNN…KCLN). Disordered regions lie at residues 307–338 (ARRK…SDTA), 413–485 (RGPP…GAPL), 550–608 (KPPS…NQAQ), 742–766 (STEG…ELAV), and 779–811 (SNCH…NPAD). The segment covering 312 to 338 (PSPASAAGQIQGPGPSASTTASPSDTA) has biased composition (low complexity). The segment covering 460 to 485 (IHPPTTPTMPGNPPGLLPPPPPGAPL) has biased composition (pro residues). Over residues 554-570 (GFSSNGENFIPSNSSET) the composition is skewed to polar residues. A compositionally biased stretch (low complexity) spans 571–603 (PGGKPPNSSSSPRESKQGSSKPSDSSPSCSGQS). Residues 783–793 (LEGDTGKKAGE) show a composition bias toward basic and acidic residues.

It belongs to the SOBP family.

Its function is as follows. Implicated in development of the cochlea. The sequence is that of Sine oculis-binding protein homolog from Gallus gallus (Chicken).